The chain runs to 502 residues: Cytochrome P450 2J2 (502 aa).

Cysteine 448 is a binding site for heme.

Belongs to the cytochrome P450 family. Requires heme as cofactor. In terms of tissue distribution, highly expressed in heart, present at lower levels in liver, kidney and skeletal muscle (at protein level).

It localises to the endoplasmic reticulum membrane. The protein resides in the microsome membrane. It catalyses the reaction (5Z,8Z,11Z,14Z)-eicosatetraenoate + reduced [NADPH--hemoprotein reductase] + O2 = 5,6-epoxy-(8Z,11Z,14Z)-eicosatrienoate + oxidized [NADPH--hemoprotein reductase] + H2O + H(+). The enzyme catalyses (5Z,8Z,11Z,14Z)-eicosatetraenoate + reduced [NADPH--hemoprotein reductase] + O2 = (8R,9S)-epoxy-(5Z,11Z,14Z)-eicosatrienoate + oxidized [NADPH--hemoprotein reductase] + H2O + H(+). The catalysed reaction is (5Z,8Z,11Z,14Z)-eicosatetraenoate + reduced [NADPH--hemoprotein reductase] + O2 = (8S,9R)-epoxy-(5Z,11Z,14Z)-eicosatrienoate + oxidized [NADPH--hemoprotein reductase] + H2O + H(+). It carries out the reaction (5Z,8Z,11Z,14Z)-eicosatetraenoate + reduced [NADPH--hemoprotein reductase] + O2 = (11R,12S)-epoxy-(5Z,8Z,14Z)-eicosatrienoate + oxidized [NADPH--hemoprotein reductase] + H2O + H(+). It catalyses the reaction (5Z,8Z,11Z,14Z)-eicosatetraenoate + reduced [NADPH--hemoprotein reductase] + O2 = (11S,12R)-epoxy-(5Z,8Z,14Z)-eicosatrienoate + oxidized [NADPH--hemoprotein reductase] + H2O + H(+). The enzyme catalyses (5Z,8Z,11Z,14Z)-eicosatetraenoate + reduced [NADPH--hemoprotein reductase] + O2 = (14R,15S)-epoxy-(5Z,8Z,11Z)-eicosatrienoate + oxidized [NADPH--hemoprotein reductase] + H2O + H(+). The catalysed reaction is (5Z,8Z,11Z,14Z)-eicosatetraenoate + reduced [NADPH--hemoprotein reductase] + O2 = (14S,15R)-epoxy-(5Z,8Z,11Z)-eicosatrienoate + oxidized [NADPH--hemoprotein reductase] + H2O + H(+). It carries out the reaction (15S)-hydroperoxy-(5Z,8Z,11Z,13E)-eicosatetraenoate = (13S)-hydroxy-(14S,15S)-epoxy-(5Z,8Z,11Z)-eicosatrienoate. It catalyses the reaction (15S)-hydroperoxy-(5Z,8Z,11Z,13E)-eicosatetraenoate = (13R)-hydroxy-(14S,15S)-epoxy-(5Z,8Z,11Z)-eicosatrienoate. The enzyme catalyses (5Z,8Z,11Z,14Z,17Z)-eicosapentaenoate + reduced [NADPH--hemoprotein reductase] + O2 = (17R,18S)-epoxy-(5Z,8Z,11Z,14Z)-eicosatetraenoate + oxidized [NADPH--hemoprotein reductase] + H2O + H(+). The catalysed reaction is (5Z,8Z,11Z,14Z,17Z)-eicosapentaenoate + reduced [NADPH--hemoprotein reductase] + O2 = (17S,18R)-epoxy-(5Z,8Z,11Z,14Z)-eicosatetraenoate + oxidized [NADPH--hemoprotein reductase] + H2O + H(+). It carries out the reaction (4Z,7Z,10Z,13Z,16Z,19Z)-docosahexaenoate + reduced [NADPH--hemoprotein reductase] + O2 = (19R,20S)-epoxy-(4Z,7Z,10Z,13Z,16Z)-docosapentaenoate + oxidized [NADPH--hemoprotein reductase] + H2O + H(+). It catalyses the reaction (4Z,7Z,10Z,13Z,16Z,19Z)-docosahexaenoate + reduced [NADPH--hemoprotein reductase] + O2 = (19S,20R)-epoxy-(4Z,7Z,10Z,13Z,16Z)-docosapentaenoate + oxidized [NADPH--hemoprotein reductase] + H2O + H(+). The enzyme catalyses albendazole + reduced [NADPH--hemoprotein reductase] + O2 = hydroxyalbendazole + oxidized [NADPH--hemoprotein reductase] + H2O + H(+). The catalysed reaction is albendazole + reduced [NADPH--hemoprotein reductase] + O2 = albendazole S-oxide + oxidized [NADPH--hemoprotein reductase] + H2O + H(+). It carries out the reaction fenbendazole + reduced [NADPH--hemoprotein reductase] + O2 = fenbendazole S-oxide + oxidized [NADPH--hemoprotein reductase] + H2O + H(+). Its pathway is lipid metabolism; arachidonate metabolism. In terms of biological role, a cytochrome P450 monooxygenase involved in the metabolism of polyunsaturated fatty acids (PUFA) in the cardiovascular system. Mechanistically, uses molecular oxygen inserting one oxygen atom into a substrate, and reducing the second into a water molecule, with two electrons provided by NADPH via cytochrome P450 reductase (NADPH--hemoprotein reductase). Catalyzes the epoxidation of double bonds of PUFA. Converts arachidonic acid to four regioisomeric epoxyeicosatrienoic acids (EpETrE), likely playing a major role in the epoxidation of endogenous cardiac arachidonic acid pools. In endothelial cells, participates in eicosanoids metabolism by converting hydroperoxide species into hydroxy epoxy metabolites. In combination with 15-lipoxygenase metabolizes arachidonic acid and converts hydroperoxyicosatetraenoates (HpETEs) into hydroxy epoxy eicosatrienoates (HEETs), which are precursors of vasodilatory trihydroxyicosatrienoic acids (THETAs). This hydroperoxide isomerase activity is NADPH- and O2-independent. Catalyzes the monooxygenation of a various xenobiotics, such as danazol, amiodarone, terfenadine, astemizole, thioridazine, tamoxifen, cyclosporin A and nabumetone. Catalyzes hydroxylation of the anthelmintics albendazole and fenbendazole. Catalyzes the sulfoxidation of fenbedazole. The polypeptide is Cytochrome P450 2J2 (Homo sapiens (Human)).